The following is a 239-amino-acid chain: Probable transcriptional regulatory protein lmo0369 (239 aa).

The protein belongs to the TACO1 family. YeeN subfamily.

It localises to the cytoplasm. In Listeria monocytogenes serovar 1/2a (strain ATCC BAA-679 / EGD-e), this protein is Probable transcriptional regulatory protein lmo0369.